Here is a 992-residue protein sequence, read N- to C-terminus: Disks large-associated protein 4 (992 aa).

Residues 1-20 show a composition bias toward basic and acidic residues; it reads MKGLGDSRPRHLSDSLDPPH. Disordered stretches follow at residues 1 to 30, 47 to 66, and 157 to 206; these read MKGLGDSRPRHLSDSLDPPHEPLFAGTDRN, PGQNTLPGDGLFPLNNQLPP, and LEGT…GWWS. The segment covering 162–171 has biased composition (gly residues); the sequence is GKVGGNGSKK. The span at 172–194 shows a compositional bias: basic and acidic residues; it reads GGMEDGKGRRAKSKERAKAGEPK. Ser-206 and Ser-207 each carry phosphoserine. An Omega-N-methylarginine modification is found at Arg-291. A disordered region spans residues 342–396; that stretch reads STTLLSPRETDAAAEGPIPCRRMRSGSYIKAMGDEDSDESGGSPKPSPKTAARRQ. Residues Ser-378, Ser-381, Ser-388, Ser-405, Ser-415, and Ser-421 each carry the phosphoserine modification. 3 disordered regions span residues 527-751, 763-798, and 915-992; these read SVSL…GPRQ, SYGDNSDPALEASSLPPPDPWLETSSSSPAEPAQPG, and TPEK…QTRL. The span at 528 to 554 shows a compositional bias: low complexity; that stretch reads VSLQSLSPPPSTGSLSNSRTLPSSSCL. Residues 576–591 show a composition bias toward polar residues; that stretch reads VTVQSSTESAQDTYLD. 6 positions are modified to phosphoserine: Ser-580, Ser-581, Ser-609, Ser-611, Ser-665, and Ser-744. Residues 600 to 620 show a composition bias toward low complexity; the sequence is TSQSGLSNSSDSLDSSTRPPS. Thr-915 bears the Phosphothreonine mark. Composition is skewed to basic and acidic residues over residues 915–925 and 940–958; these read TPEKRKEEKKP and VSRDKASDASDKQRQEARK. The span at 969-978 shows a compositional bias: polar residues; that stretch reads VRQNSATESA. Ser-973 is subject to Phosphoserine.

The protein belongs to the SAPAP family. As to quaternary structure, interacts with DLG1 and DLG4/PSD-95.

It localises to the membrane. May play a role in the molecular organization of synapses and neuronal cell signaling. Could be an adapter protein linking ion channel to the subsynaptic cytoskeleton. May induce enrichment of PSD-95/SAP90 at the plasma membrane. The polypeptide is Disks large-associated protein 4 (DLGAP4) (Homo sapiens (Human)).